A 181-amino-acid polypeptide reads, in one-letter code: Shikimate kinase (181 aa).

17–22 (GAGKTT) serves as a coordination point for ATP. Residue Thr-21 coordinates Mg(2+). Substrate-binding residues include Asp-39, Arg-63, and Gly-85. Residue Arg-122 participates in ATP binding. Arg-141 provides a ligand contact to substrate.

This sequence belongs to the shikimate kinase family. As to quaternary structure, monomer. Requires Mg(2+) as cofactor.

Its subcellular location is the cytoplasm. It carries out the reaction shikimate + ATP = 3-phosphoshikimate + ADP + H(+). It participates in metabolic intermediate biosynthesis; chorismate biosynthesis; chorismate from D-erythrose 4-phosphate and phosphoenolpyruvate: step 5/7. Its function is as follows. Catalyzes the specific phosphorylation of the 3-hydroxyl group of shikimic acid using ATP as a cosubstrate. This Nostoc sp. (strain PCC 7120 / SAG 25.82 / UTEX 2576) protein is Shikimate kinase.